The primary structure comprises 152 residues: Protein Smg homolog (152 aa).

Belongs to the Smg family.

The polypeptide is Protein Smg homolog (Bordetella petrii (strain ATCC BAA-461 / DSM 12804 / CCUG 43448)).